A 252-amino-acid chain; its full sequence is MSDIVLITGATSGFGRAAARRFADAGWSLILTGRREERLTELAEELSQRVRVHTAVLDVRDEKAVQSVIDELPEAFRRVKTLVNNAGLALAPQPAQDVDLADWHTMIDTNIKGLVNVTHAVLPTLIETGAGASIVNLGSVAGQWPYPGSHVYGASKAFVQQFTYNLRCDLQGTGVRVTDVAPGMAETEFTLVRTGGDQAASDALYRDTTPLQAEDVAELIFYTATLPAHVNVNRLEVMPTRQAWSAFAVDRD.

NADP(+) is bound at residue 6 to 30; that stretch reads LITGATSGFGRAAARRFADAGWSLI. S139 contributes to the substrate binding site. Residue Y152 is the Proton acceptor of the active site.

It belongs to the short-chain dehydrogenases/reductases (SDR) family. Homodimer and heterotetramer.

The enzyme catalyses 2-hydroxyethane-1-sulfonate + NADP(+) = sulfoacetaldehyde + NADPH + H(+). It participates in organosulfur degradation. Its function is as follows. Catalyzes the formation of isethionate from 2-sulfoacetaldehyde in the deaminative pathway of taurine. Constitutively expressed enzyme that only mediates a small part of the activity observed in taurine-grown cells. This is Sulfoacetaldehyde reductase 2 (isfD2) from Chromohalobacter salexigens (strain ATCC BAA-138 / DSM 3043 / CIP 106854 / NCIMB 13768 / 1H11).